A 373-amino-acid chain; its full sequence is Phosphoserine aminotransferase (373 aa).

R46 serves as a coordination point for L-glutamate. Residues F104, T150, D172, and Q195 each coordinate pyridoxal 5'-phosphate. At K196 the chain carries N6-(pyridoxal phosphate)lysine. 247 to 248 (NT) serves as a coordination point for pyridoxal 5'-phosphate.

Belongs to the class-V pyridoxal-phosphate-dependent aminotransferase family. SerC subfamily. As to quaternary structure, homodimer. Pyridoxal 5'-phosphate is required as a cofactor.

The protein resides in the cytoplasm. The enzyme catalyses O-phospho-L-serine + 2-oxoglutarate = 3-phosphooxypyruvate + L-glutamate. It catalyses the reaction 4-(phosphooxy)-L-threonine + 2-oxoglutarate = (R)-3-hydroxy-2-oxo-4-phosphooxybutanoate + L-glutamate. It functions in the pathway amino-acid biosynthesis; L-serine biosynthesis; L-serine from 3-phospho-D-glycerate: step 2/3. The protein operates within cofactor biosynthesis; pyridoxine 5'-phosphate biosynthesis; pyridoxine 5'-phosphate from D-erythrose 4-phosphate: step 3/5. Functionally, catalyzes the reversible conversion of 3-phosphohydroxypyruvate to phosphoserine and of 3-hydroxy-2-oxo-4-phosphonooxybutanoate to phosphohydroxythreonine. In Rhodococcus opacus (strain B4), this protein is Phosphoserine aminotransferase.